Reading from the N-terminus, the 231-residue chain is Cytochrome c oxidase assembly factor 7 (231 aa).

Alanine 2 is modified (N-acetylalanine). 5 Sel1-like repeats span residues 34 to 66, 68 to 104, 108 to 146, 147 to 183, and 184 to 219; these read PDGC…EENQ, SDSC…EKPG, IAAC…DGGY, TSSC…DLGH, and IWAC…QLHK.

This sequence belongs to the hcp beta-lactamase family. In terms of assembly, interacts with CHCHD4/MIA40 through transient intermolecular disulfide bonds.

It localises to the mitochondrion intermembrane space. Its function is as follows. Required for assembly of mitochondrial respiratory chain complex I and complex IV. The sequence is that of Cytochrome c oxidase assembly factor 7 (COA7) from Homo sapiens (Human).